The primary structure comprises 445 residues: MQTKIFARLAGIGRARFVGTMPDKTKFISKSGTYPQGFSLNGIASGVKANGKKDLAILFSSRPCNAAAVFTKNAFQAAPVQVSRQTLNGCGGKDIHCVVFNSGCANAVTGEGGLMDAQLITAEADNLTRPHWTSWTENSEEFPSSLVMSTGVIGQRLKLDKIQSGLEHAVEDLGSTHEYWMRAAEAICTTDTFPKLVSRELSIAGKVYRIAGFAKGAGMINPNLATLLGLFVTDAPISVDAVRSILRHAINNSFNSISIDGDTSTNDTIAFLANGAAGGSEITKSSPAYKEIRDAVTDIAQQLAKLVVRDGEGATKFVTVQVRGARSEKDAALVASTISNSALVKTAFFGEDANWGRILCAVGYSGAAVNPPATTVSFIPADGTEPLKLLVNGEPQNVDETRASEILSQDELTVDVDLGCGPYAKTNWTCDFSYDYVRINADYRS.

Substrate-binding residues include threonine 189, lysine 215, threonine 226, glutamate 312, asparagine 440, and serine 445. Threonine 226 functions as the Nucleophile in the catalytic mechanism.

This sequence belongs to the ArgJ family. Heterodimer of an alpha and a beta chain. Post-translationally, the alpha and beta chains are autoproteolytically processed from a single precursor protein within the mitochondrion.

It localises to the mitochondrion matrix. The enzyme catalyses N(2)-acetyl-L-ornithine + L-glutamate = N-acetyl-L-glutamate + L-ornithine. The catalysed reaction is L-glutamate + acetyl-CoA = N-acetyl-L-glutamate + CoA + H(+). It functions in the pathway amino-acid biosynthesis; L-arginine biosynthesis; L-ornithine and N-acetyl-L-glutamate from L-glutamate and N(2)-acetyl-L-ornithine (cyclic): step 1/1. Its pathway is amino-acid biosynthesis; L-arginine biosynthesis; N(2)-acetyl-L-ornithine from L-glutamate: step 1/4. Functionally, catalyzes two activities which are involved in the cyclic version of arginine biosynthesis: the synthesis of acetylglutamate from glutamate and acetyl-CoA, and of ornithine by transacetylation between acetylornithine and glutamate. This Schizosaccharomyces pombe (strain 972 / ATCC 24843) (Fission yeast) protein is Arginine biosynthesis bifunctional protein ArgJ, mitochondrial.